The following is a 47-amino-acid chain: Potassium channel toxin TcoKIK (47 aa).

The BetaSPN-type CS-alpha/beta domain occupies Glu14–Leu47. Intrachain disulfides connect Cys17/Cys37, Cys24/Cys42, and Cys28/Cys44.

Belongs to the long chain scorpion toxin family. Class 2 subfamily. Expressed by the venom gland.

The protein resides in the secreted. The protein localises to the target cell membrane. Blocks voltage-gated potassium channels. Its application (10 uM) to cells recombinantly expressing channels results in membrane damage and cell lysis. In Tityus costatus (Brazilian scorpion), this protein is Potassium channel toxin TcoKIK.